The following is a 711-amino-acid chain: MLNPIVRKFQYGQHTVTLETGMMARQATAAVMVSMDDTAVFVTVVGQKKTKPGQDFFPLTVNYQERTYAAGKIPGGFFRREGRPSEGETLIARLIDRPVRPLFPEGFINEVQVIATVVSVNPQVNPDIVAMIGASAALSLSGLPFNGPIGSARVGYINDQYVLNPTQDELKESKLDLVVAGTEAAVLMVESEAELLSEDQMLGAVVFGHEQQQIVIENIKDLVKEAGKPRWDWQPEAVNEALNARVAALAEARLSDAYRITDKQERYAQIDVIKSETIATLVAEDESLDANELSEILHAIEKNAVRSRVLAGEPRIDGREKDMIRGLDVRTGVLPRTHGSALFTRGETQALVTATLGTARDAQNIDELMGDRTDSFLFHYNFPPYSVGETGMVGSPKRREIGHGRLAKRGVLAVMPEADKFPYTVRVVSEITESNGSSSMASVCGASLALMDAGVPIKAAVAGIAMGLVKEGDNFVVLSDILGDEDHLGDMDFKVAGSREGISALQMDIKIEGITKEIMQVALNQAKGARLHILGVMEQAINAPRGDISQFAPRIHTIKISPDKIKDVIGKGGSVIRALTEETGTTIEIEDDGTVKIAATDGEKAKFAIRRIEEITAEIEVGRIYNGKVTRIVDFGAFVAIGGGKEGLVHISQIADKRVEKVTDYLQMGQEVPVKVLEVDRQGRVRLSIKEATEQTQPAAAPEAPAAEQGE.

Asp486 and Asp492 together coordinate Mg(2+). The KH domain occupies 553–612 (PRIHTIKISPDKIKDVIGKGGSVIRALTEETGTTIEIEDDGTVKIAATDGEKAKFAIRRI). Residues 622 to 690 (GRIYNGKVTR…RQGRVRLSIK (69 aa)) enclose the S1 motif domain. Residues 690 to 711 (KEATEQTQPAAAPEAPAAEQGE) are disordered. Positions 694-711 (EQTQPAAAPEAPAAEQGE) are enriched in low complexity.

This sequence belongs to the polyribonucleotide nucleotidyltransferase family. As to quaternary structure, component of the RNA degradosome, which is a multiprotein complex involved in RNA processing and mRNA degradation. It depends on Mg(2+) as a cofactor.

It is found in the cytoplasm. The catalysed reaction is RNA(n+1) + phosphate = RNA(n) + a ribonucleoside 5'-diphosphate. Involved in mRNA degradation. Catalyzes the phosphorolysis of single-stranded polyribonucleotides processively in the 3'- to 5'-direction. The chain is Polyribonucleotide nucleotidyltransferase from Enterobacter sp. (strain 638).